We begin with the raw amino-acid sequence, 598 residues long: uncharacterized protein (598 aa).

Over residues 1-23 the composition is skewed to basic and acidic residues; the sequence is MSHEGSRQARDRGVTRSKAEKAR. Disordered stretches follow at residues 1 to 32, 151 to 190, and 222 to 241; these read MSHEGSRQARDRGVTRSKAEKARPPTQPVPQV, FHNEEPGNPDQFLLGSSWDKESQKPTQPSEPSAEPKVTPR, and PSKESLRSTAEGERVYSPQS. Residues 225-235 show a composition bias toward basic and acidic residues; it reads ESLRSTAEGER. 2 positions are modified to phosphoserine: S238 and S242. Disordered stretches follow at residues 366–396 and 551–571; these read RRSQAGTATSACESQALSSRAPSKPHVSSPR and AEEGTPQAPEQQPIQTGVSKP. 2 stretches are compositionally biased toward polar residues: residues 369–386 and 558–569; these read QAGTATSACESQALSSRA and APEQQPIQTGVS.

This is an uncharacterized protein from Mus musculus (Mouse).